Consider the following 210-residue polypeptide: ATP-dependent Clp protease proteolytic subunit (210 aa).

Ser-107 acts as the Nucleophile in catalysis. His-132 is a catalytic residue.

It belongs to the peptidase S14 family. As to quaternary structure, fourteen ClpP subunits assemble into 2 heptameric rings which stack back to back to give a disk-like structure with a central cavity, resembling the structure of eukaryotic proteasomes.

It is found in the cytoplasm. It catalyses the reaction Hydrolysis of proteins to small peptides in the presence of ATP and magnesium. alpha-casein is the usual test substrate. In the absence of ATP, only oligopeptides shorter than five residues are hydrolyzed (such as succinyl-Leu-Tyr-|-NHMec, and Leu-Tyr-Leu-|-Tyr-Trp, in which cleavage of the -Tyr-|-Leu- and -Tyr-|-Trp bonds also occurs).. In terms of biological role, cleaves peptides in various proteins in a process that requires ATP hydrolysis. Has a chymotrypsin-like activity. Plays a major role in the degradation of misfolded proteins. The protein is ATP-dependent Clp protease proteolytic subunit of Ruegeria sp. (strain TM1040) (Silicibacter sp.).